The sequence spans 96 residues: UPF0729 protein AGAP000931 (96 aa).

Residues 65–96 (VPPGHDPVGPTVAADTATSDAVDDAASSKKTL) form a disordered region. A compositionally biased stretch (low complexity) spans 75–96 (TVAADTATSDAVDDAASSKKTL).

It belongs to the UPF0729 family.

In Anopheles gambiae (African malaria mosquito), this protein is UPF0729 protein AGAP000931.